We begin with the raw amino-acid sequence, 141 residues long: Large ribosomal subunit protein uL16m (141 aa).

It belongs to the universal ribosomal protein uL16 family.

It localises to the mitochondrion. This chain is Large ribosomal subunit protein uL16m (RPL16), found in Acanthamoeba castellanii (Amoeba).